Consider the following 539-residue polypeptide: Chaperonin GroEL 1 (539 aa).

ATP-binding positions include 30–33, lysine 51, 87–91, glycine 415, 480–482, and aspartate 496; these read TLGP, DGTTT, and NAA.

Belongs to the chaperonin (HSP60) family. In terms of assembly, forms a cylinder of 14 subunits composed of two heptameric rings stacked back-to-back. Interacts with the co-chaperonin GroES.

It is found in the cytoplasm. It catalyses the reaction ATP + H2O + a folded polypeptide = ADP + phosphate + an unfolded polypeptide.. In terms of biological role, together with its co-chaperonin GroES, plays an essential role in assisting protein folding. The GroEL-GroES system forms a nano-cage that allows encapsulation of the non-native substrate proteins and provides a physical environment optimized to promote and accelerate protein folding. This chain is Chaperonin GroEL 1, found in Bradyrhizobium sp. (strain ORS 278).